The primary structure comprises 510 residues: NAD(P)H-quinone oxidoreductase subunit 2 B, chloroplastic (510 aa).

Helical transmembrane passes span 24–44, 59–79, 99–119, 124–144, 150–170, 184–204, 229–249, 295–315, 323–343, 354–374, 395–415, 418–438, and 484–504; these read LLLF…GLIL, WFYF…LFRW, IFQF…VEYI, MAIT…MFLC, ITIF…SGYT, LLMG…LYGL, ISIA…LAPF, WHLL…LIAI, MLAY…IVGD, YMLF…LFGL, ALSL…AGFF, LHLF…IGLL, and MIVC…ILAI.

The protein belongs to the complex I subunit 2 family. NDH is composed of at least 16 different subunits, 5 of which are encoded in the nucleus.

The protein localises to the plastid. It is found in the chloroplast thylakoid membrane. It carries out the reaction a plastoquinone + NADH + (n+1) H(+)(in) = a plastoquinol + NAD(+) + n H(+)(out). It catalyses the reaction a plastoquinone + NADPH + (n+1) H(+)(in) = a plastoquinol + NADP(+) + n H(+)(out). NDH shuttles electrons from NAD(P)H:plastoquinone, via FMN and iron-sulfur (Fe-S) centers, to quinones in the photosynthetic chain and possibly in a chloroplast respiratory chain. The immediate electron acceptor for the enzyme in this species is believed to be plastoquinone. Couples the redox reaction to proton translocation, and thus conserves the redox energy in a proton gradient. In Acorus calamus (Sweet flag), this protein is NAD(P)H-quinone oxidoreductase subunit 2 B, chloroplastic.